Reading from the N-terminus, the 449-residue chain is Tryptophan--tRNA ligase (449 aa).

Residues 10–12 and 18–19 each bind ATP; these read TTT and GN. Residues 11 to 19 carry the 'HIGH' region motif; that stretch reads TTGTPHLGN. An L-tryptophan-binding site is contributed by Asp-143. ATP is bound by residues 155–157, Leu-197, and 204–208; these read GRD and KMSKS. Positions 204–208 match the 'KMSKS' region motif; the sequence is KMSKS.

This sequence belongs to the class-I aminoacyl-tRNA synthetase family. Homodimer.

Its subcellular location is the cytoplasm. The catalysed reaction is tRNA(Trp) + L-tryptophan + ATP = L-tryptophyl-tRNA(Trp) + AMP + diphosphate + H(+). Catalyzes the attachment of tryptophan to tRNA(Trp). The chain is Tryptophan--tRNA ligase from Pseudomonas putida (strain ATCC 47054 / DSM 6125 / CFBP 8728 / NCIMB 11950 / KT2440).